Consider the following 160-residue polypeptide: MNSSIKRLHKEYASFQAGDISGLLLLKPVTDVDMFHWKAVIEGPTETPYEGGQWVLDIHVHEGYPISPPSVYFQTKIVHPNISWTNGEVCMDILKTHWSPAWSLQSACLAIISLLSNYDASSPLNVDAAKLLRTGDKTAYNSLVRCTTYLYAKGKIEDLS.

The region spanning 3 to 153 is the UBC core domain; the sequence is SSIKRLHKEY…VRCTTYLYAK (151 aa). Cys-90 functions as the Glycyl thioester intermediate in the catalytic mechanism.

This sequence belongs to the ubiquitin-conjugating enzyme family.

It carries out the reaction S-ubiquitinyl-[E1 ubiquitin-activating enzyme]-L-cysteine + [E2 ubiquitin-conjugating enzyme]-L-cysteine = [E1 ubiquitin-activating enzyme]-L-cysteine + S-ubiquitinyl-[E2 ubiquitin-conjugating enzyme]-L-cysteine.. It functions in the pathway protein modification; protein ubiquitination. Its function is as follows. Catalyzes the covalent attachment of ubiquitin to other proteins. The sequence is that of Ubiquitin-conjugating enzyme E2 16 (ubc16) from Schizosaccharomyces pombe (strain 972 / ATCC 24843) (Fission yeast).